A 117-amino-acid chain; its full sequence is Iron-sulfur cluster insertion protein ErpA (117 aa).

Iron-sulfur cluster contacts are provided by C45, C109, and C111.

Belongs to the HesB/IscA family. In terms of assembly, homodimer. The cofactor is iron-sulfur cluster.

Its function is as follows. Required for insertion of 4Fe-4S clusters for at least IspG. The sequence is that of Iron-sulfur cluster insertion protein ErpA from Hahella chejuensis (strain KCTC 2396).